The primary structure comprises 354 residues: Protein sex-lethal (354 aa).

The segment at 1–20 (MYGNNNPGSNNNNGGYPPYG) is disordered. RRM domains follow at residues 127-205 (TNLI…YARP) and 213-293 (TNLY…LAQE).

Part of a complex containing fl(2)d, Sxl and vir. Interacts with nito. Interacts with Unr; cooperates with Sxl to prevent translation of msl-2 transcripts. Interacts with how; promoting nuclear retention of msl-2 transcripts. In terms of tissue distribution, the embryo-specific isoform is not expressed in the pole cells, which are the progenitors of the germline.

It localises to the nucleus. The protein localises to the cytoplasm. In terms of biological role, sex determination switch protein, which controls sexual development and dosage compensation in females. Sxl protein is only active in females: it is inactive in males throughout development. Acts as a mRNA-binding protein, which specifically binds to a subset of pre-mRNAs and mRNAs and regulates their processing and/or translation. Promotes sexual development by controlling the female-specific alternative splicing of the transformer (tra) pre-mRNA: binds tightly to a characteristic uridine-rich polypyrimidine tract at the non-sex specific 3' splice site in one of the tra introns, preventing the general splicing factor U2AF from binding to this site and forcing it to bind to the female-specific 3' splice site. Acts as an inhibitor of dosage compensation in females by preventing production of msl-2 protein, an essential component of the MSL complex, the complex that mediates X-chromosome dosage compensation. Specifially binds to uridine stretches in both the 5'- and 3'-UTR of msl-2 transcripts. Sxl first acts at the splicing level by promoting retention of an intron in the 5' UTR of msl-2 pre-mRNA. The retained intron contains Sxl-binding sites that are required for subsequent steps of repression: after msl-2 mRNA export into the cytoplasm, Sxl coordinates its translational repression by targeting early steps of translation initiation. Together with how, Sxl also prevents production of msl-2 protein by preventing nuclear export of msl-2 transcripts. This chain is Protein sex-lethal, found in Drosophila subobscura (Fruit fly).